Consider the following 121-residue polypeptide: Small ribosomal subunit protein uS13 (121 aa).

The segment at 94–121 is disordered; that stretch reads GLPVRGQRTRTNARTRKGKRKTVAGKKK.

It belongs to the universal ribosomal protein uS13 family. As to quaternary structure, part of the 30S ribosomal subunit. Forms a loose heterodimer with protein S19. Forms two bridges to the 50S subunit in the 70S ribosome.

Located at the top of the head of the 30S subunit, it contacts several helices of the 16S rRNA. In the 70S ribosome it contacts the 23S rRNA (bridge B1a) and protein L5 of the 50S subunit (bridge B1b), connecting the 2 subunits; these bridges are implicated in subunit movement. Contacts the tRNAs in the A and P-sites. The protein is Small ribosomal subunit protein uS13 of Treponema pallidum (strain Nichols).